The sequence spans 157 residues: Increased recombination centers protein 23 (157 aa).

The Cytoplasmic segment spans residues 1 to 6 (MIEALE). The helical transmembrane segment at 7–29 (IVLLLVIQSLQYICRTCIAFLLI) threads the bilayer. At 30–33 (PFLG) the chain is on the lumenal side. The helical transmembrane segment at 34–56 (LYAFDLFLYVYRMILYLSQMFNY) threads the bilayer. Over 57-157 (KRKLGRSKTN…EEGYYIAGSI (101 aa)) the chain is Cytoplasmic.

The protein localises to the endoplasmic reticulum membrane. Is probably involved in a pathway contributing to genomic integrity. The sequence is that of Increased recombination centers protein 23 (IRC23) from Saccharomyces cerevisiae (strain ATCC 204508 / S288c) (Baker's yeast).